The sequence spans 378 residues: Apolipoprotein A-IV (378 aa).

Residues 1 to 20 (MFLKAVVLTLSLVAITGARA) form the signal peptide. 13 consecutive repeat copies span residues 33–54 (DYFS…QSEL), 60–81 (SVTK…RNSW), 82–98 (EHSR…RQVG), 110–130 (PNCD…QAVG), 131–152 (PYAE…NQLT), 153–174 (SHAQ…SSLT), 175–196 (PFAD…GHLT), 197–218 (PYTD…RSLA), 219–240 (PYAQ…FQMK), 241–262 (KNAE…QRLA), 263–280 (PVAE…AGLH), 281–302 (KSLA…RNVG), and 303–324 (PYGE…QKLG). Residues 33-324 (DYFSQLSNNA…QVEELRQKLG (292 aa)) form a 13 X 22 AA approximate tandem repeats region. The tract at residues 354-378 (EKESQDTPVALPKQEQEQSAVPLES) is disordered.

Belongs to the apolipoprotein A1/A4/E family. As to quaternary structure, homodimer.

Its subcellular location is the secreted. May have a role in chylomicrons and VLDL secretion and catabolism. Required for efficient activation of lipoprotein lipase by ApoC-II; potent activator of LCAT. Apoa-IV is a major component of HDL and chylomicrons. The polypeptide is Apolipoprotein A-IV (Canis lupus familiaris (Dog)).